We begin with the raw amino-acid sequence, 326 residues long: tRNA-modifying protein YgfZ (326 aa).

2 residues coordinate folate: W27 and W189.

This sequence belongs to the tRNA-modifying YgfZ family.

It is found in the cytoplasm. Functionally, folate-binding protein involved in regulating the level of ATP-DnaA and in the modification of some tRNAs. It is probably a key factor in regulatory networks that act via tRNA modification, such as initiation of chromosomal replication. The sequence is that of tRNA-modifying protein YgfZ from Enterobacter sp. (strain 638).